Here is a 118-residue protein sequence, read N- to C-terminus: ATP synthase subunit gamma, chloroplastic (118 aa).

Cysteines 30 and 36 form a disulfide.

It belongs to the ATPase gamma chain family. In terms of assembly, F-type ATPases have 2 components, CF(1) - the catalytic core - and CF(0) - the membrane proton channel. CF(1) has five subunits: alpha(3), beta(3), gamma(1), delta(1), epsilon(1). CF(0) has four main subunits: a, b, b' and c.

Its subcellular location is the plastid. It is found in the chloroplast thylakoid membrane. Produces ATP from ADP in the presence of a proton gradient across the membrane. The gamma chain is believed to be important in regulating ATPase activity and the flow of protons through the CF(0) complex. Functionally, inceptin is a proteolytic fragment produced by insect larvae that previously ingested the protein. This peptide mediate plant perception of herbivory through the induction of volatile, phenylpropanoid and protease inhibitor defenses such as ethylene, jasmonic acid and salicylic acid for example. The polypeptide is ATP synthase subunit gamma, chloroplastic (Vigna unguiculata (Cowpea)).